Here is a 679-residue protein sequence, read N- to C-terminus: MSKNLLIELGLEELPAYVVTPSEKQLGERLATFLTENRLSFEDIQTFSTPRRLAVRVSGLADQQTDLTEDFKGPAKKIALDADGNFSKAAQGFVRGKGLTTDAIEFREVKGEEYVYVTKHEAGKPAKEVLLGVTEVLSAMTFPVSMHWANNSFEYIRPVHTLTVLLNDEALELDFLDIHSGRVSRGHRFLGTETTITSADSYEADLRSQFVIADAKERQEMIVEQIKTLEVEQGVQVDIDEDLLNEVLNLVEFPTAFMGSFEAKYLDVPEEVLVTSMKNHQRYFVVRDQAGHLMPNFVSVRNGNDQAIENVIKGNEKVLVARLEDGEFFWREDQKLQIADLVAKLTNVTFHEKIGSLAEHMDRTRVIAASLAKEANLSAEEVTAVDRAAQIYKFDLLTGMVGEFDELQGIMGEKYALLAGEDAAVATAIREHYLPDAAGGALPETKVGAVLALAAKLDTLLSFFSVGLIPSGSNDPYALRRATQGIVRILDHFGWRIPMDKLVDSLYDLSFDSLTYANKADVMNFIRARVDKMMGKAAPKDIREAILASSTFVVPEMLAAAEALVKASHTENYKPAVESLSRAFNLAEKADASVQVDPSLFENEQENTLFAAIQGLTLAGSAAQQLEQVFALSPVINDFFDNTMVMAGDQALKNNRLAILSDLVSKAKTIVAFNQLNTK.

Belongs to the class-II aminoacyl-tRNA synthetase family. As to quaternary structure, tetramer of two alpha and two beta subunits.

The protein resides in the cytoplasm. It catalyses the reaction tRNA(Gly) + glycine + ATP = glycyl-tRNA(Gly) + AMP + diphosphate. This is Glycine--tRNA ligase beta subunit from Streptococcus pyogenes serotype M1.